Here is a 947-residue protein sequence, read N- to C-terminus: Valine--tRNA ligase (947 aa).

Positions 45-55 (PNVTGSLHMGH) match the 'HIGH' region motif. The 'KMSKS' region motif lies at 591-595 (KMSKS). Lys-594 provides a ligand contact to ATP.

Belongs to the class-I aminoacyl-tRNA synthetase family. ValS type 1 subfamily. As to quaternary structure, monomer.

The protein resides in the cytoplasm. It catalyses the reaction tRNA(Val) + L-valine + ATP = L-valyl-tRNA(Val) + AMP + diphosphate. Functionally, catalyzes the attachment of valine to tRNA(Val). As ValRS can inadvertently accommodate and process structurally similar amino acids such as threonine, to avoid such errors, it has a 'posttransfer' editing activity that hydrolyzes mischarged Thr-tRNA(Val) in a tRNA-dependent manner. This is Valine--tRNA ligase from Rhizobium meliloti (strain 1021) (Ensifer meliloti).